The chain runs to 267 residues: Hydroxyethylthiazole kinase 2 (267 aa).

Met41 is a substrate binding site. ATP is bound by residues Lys116 and Thr166. Gly193 contacts substrate.

The protein belongs to the Thz kinase family. The cofactor is Mg(2+).

The enzyme catalyses 5-(2-hydroxyethyl)-4-methylthiazole + ATP = 4-methyl-5-(2-phosphooxyethyl)-thiazole + ADP + H(+). Its pathway is cofactor biosynthesis; thiamine diphosphate biosynthesis; 4-methyl-5-(2-phosphoethyl)-thiazole from 5-(2-hydroxyethyl)-4-methylthiazole: step 1/1. Functionally, catalyzes the phosphorylation of the hydroxyl group of 4-methyl-5-beta-hydroxyethylthiazole (THZ). The chain is Hydroxyethylthiazole kinase 2 from Streptococcus pneumoniae (strain JJA).